The sequence spans 420 residues: uncharacterized protein (420 aa).

Positions 1 to 25 (MRYAMNKIPALLLVGALIIATVASG) are cleaved as a signal peptide. An N-acetylcysteine modification is found at cysteine 26. The S-archaeol cysteine moiety is linked to residue cysteine 26.

It belongs to the bacterial solute-binding protein 1 family.

It is found in the cell membrane. Its function is as follows. Probably part of a binding-protein-dependent transport system PH1036/38/39. This is an uncharacterized protein from Pyrococcus horikoshii (strain ATCC 700860 / DSM 12428 / JCM 9974 / NBRC 100139 / OT-3).